Consider the following 369-residue polypeptide: Phospho-N-acetylmuramoyl-pentapeptide-transferase (369 aa).

Transmembrane regions (helical) follow at residues 13–33 (ISGIGLASSLAAGLGIAALTL), 49–69 (LPLLLCTIASAIAGYFVVPLL), 95–115 (MGGIFFIPVAVVGACVLSNFA), 119–139 (LAVSALTLSYGLIGWIDDWQI), 154–174 (LALQIGFAAAFCLWLMFNQPA), 183–203 (WVSFALPLGFLFWPLAGFVLV), 215–235 (IDGLAGGTVAIALLALGAIVA), 237–257 (TSPALMVFCAALSGSCLGFLA), 281–301 (AVALLTNSLVALFILSGIFFV), and 346–366 (VVSSFYVIAAILAAICLAIAS).

The protein belongs to the glycosyltransferase 4 family. MraY subfamily. Mg(2+) is required as a cofactor.

It localises to the cell inner membrane. It carries out the reaction UDP-N-acetyl-alpha-D-muramoyl-L-alanyl-gamma-D-glutamyl-meso-2,6-diaminopimeloyl-D-alanyl-D-alanine + di-trans,octa-cis-undecaprenyl phosphate = di-trans,octa-cis-undecaprenyl diphospho-N-acetyl-alpha-D-muramoyl-L-alanyl-D-glutamyl-meso-2,6-diaminopimeloyl-D-alanyl-D-alanine + UMP. It participates in cell wall biogenesis; peptidoglycan biosynthesis. Functionally, catalyzes the initial step of the lipid cycle reactions in the biosynthesis of the cell wall peptidoglycan: transfers peptidoglycan precursor phospho-MurNAc-pentapeptide from UDP-MurNAc-pentapeptide onto the lipid carrier undecaprenyl phosphate, yielding undecaprenyl-pyrophosphoryl-MurNAc-pentapeptide, known as lipid I. In Nostoc sp. (strain PCC 7120 / SAG 25.82 / UTEX 2576), this protein is Phospho-N-acetylmuramoyl-pentapeptide-transferase.